The sequence spans 89 residues: Small ribosomal subunit protein uS19 (89 aa).

This sequence belongs to the universal ribosomal protein uS19 family.

Functionally, protein S19 forms a complex with S13 that binds strongly to the 16S ribosomal RNA. This chain is Small ribosomal subunit protein uS19, found in Xanthomonas axonopodis pv. citri (strain 306).